Consider the following 180-residue polypeptide: Fucolectin-2 (180 aa).

The N-terminal stretch at 1–22 is a signal peptide; it reads MKVKMIMLLFQILAILTLKSDS. An F5/8 type C-like region spans residues 31–179; it reads QENVALRGRA…VEVNVLFPAP (149 aa). Residues Asn58, Asp61, Asn63, and Ser72 each contribute to the Ca(2+) site. Intrachain disulfides connect Cys73/Cys168, Cys104/Cys105, and Cys130/Cys146. Residues His75 and Arg101 each contribute to the alpha-L-fucose site. The Cell attachment site signature appears at 101-103; that stretch reads RGD. Position 108 (Arg108) interacts with alpha-L-fucose. Residues Cys168 and Glu169 each contribute to the Ca(2+) site.

This sequence belongs to the fucolectin family. Homotrimer. As to expression, parenchymal hepatocytes.

The protein localises to the secreted. The protein resides in the extracellular space. In terms of biological role, acts as a defensive agent. Recognizes blood group fucosylated oligosaccharides including A, B, H and Lewis B-type antigens. Does not recognize Lewis A antigen and has low affinity for monovalent haptens. The protein is Fucolectin-2 of Anguilla japonica (Japanese eel).